The following is a 1835-amino-acid chain: Urea amidolyase (1835 aa).

Residues 122-129 (GAIIVGKT) and Lys747 each bind ATP. In terms of domain architecture, Biotin carboxylation spans 632-1075 (LFDTVLIANR…STNILNSYQY (444 aa)). In terms of domain architecture, ATP-grasp spans 751-948 (RQIAQKAGVP…LVEWMIRIAA (198 aa)). The residue at position 803 (Ser803) is a Phosphoserine. The ATP site is built by Glu830 and Asn865. Residues 1754–1832 (DEEEDFPEGA…DSGDIVAVIE (79 aa)) enclose the Biotinyl-binding domain. Lys1798 carries the post-translational modification N6-biotinyllysine.

As to quaternary structure, monomer. Biotin serves as cofactor.

It carries out the reaction urea + hydrogencarbonate + ATP = urea-1-carboxylate + ADP + phosphate + H(+). The catalysed reaction is urea-1-carboxylate + H2O + 3 H(+) = 2 NH4(+) + 2 CO2. It participates in nitrogen metabolism; urea degradation; CO(2) and NH(3) from urea (allophanate route): step 1/2. Its pathway is nitrogen metabolism; urea degradation; CO(2) and NH(3) from urea (allophanate route): step 2/2. In terms of biological role, hydrolysis of urea to ammonia and CO(2). This Saccharomyces cerevisiae (strain ATCC 204508 / S288c) (Baker's yeast) protein is Urea amidolyase (DUR1,2).